We begin with the raw amino-acid sequence, 154 residues long: Ribonuclease 8 (154 aa).

The N-terminal stretch at 1 to 27 is a signal peptide; sequence MAPARAGCCPLLLLLLGLWVAQIPVSA. Residue His-42 is the Proton acceptor of the active site. Cystine bridges form between Cys-64–Cys-118 and Cys-89–Cys-96. Residues 65 to 69 and Lys-90 contribute to the substrate site; that span reads KDLNT. The active-site Proton donor is His-149.

The protein belongs to the pancreatic ribonuclease family.

It is found in the secreted. In terms of biological role, has a low ribonuclease activity. In Chlorocebus aethiops (Green monkey), this protein is Ribonuclease 8 (RNASE8).